The chain runs to 160 residues: Glyoxalase domain-containing protein 5 (160 aa).

A VOC domain is found at Arg-33 to Tyr-153.

This sequence belongs to the glyoxalase I family.

The sequence is that of Glyoxalase domain-containing protein 5 (glod5) from Xenopus laevis (African clawed frog).